The primary structure comprises 269 residues: 5'-nucleotidase SurE (269 aa).

A divalent metal cation-binding residues include D11, D12, S43, and N101.

This sequence belongs to the SurE nucleotidase family. A divalent metal cation is required as a cofactor.

The protein resides in the cytoplasm. It catalyses the reaction a ribonucleoside 5'-phosphate + H2O = a ribonucleoside + phosphate. In terms of biological role, nucleotidase that shows phosphatase activity on nucleoside 5'-monophosphates. The protein is 5'-nucleotidase SurE of Prochlorococcus marinus (strain MIT 9301).